A 407-amino-acid polypeptide reads, in one-letter code: Arginine deiminase (407 aa).

Cysteine 397 acts as the Amidino-cysteine intermediate in catalysis.

It belongs to the arginine deiminase family.

Its subcellular location is the cytoplasm. It carries out the reaction L-arginine + H2O = L-citrulline + NH4(+). The protein operates within amino-acid degradation; L-arginine degradation via ADI pathway; carbamoyl phosphate from L-arginine: step 1/2. The polypeptide is Arginine deiminase (Listeria welshimeri serovar 6b (strain ATCC 35897 / DSM 20650 / CCUG 15529 / CIP 8149 / NCTC 11857 / SLCC 5334 / V8)).